The chain runs to 189 residues: Small ribosomal subunit protein uS5 (189 aa).

Residues 22 to 85 (FVDKLVAINR…EAAKRELIFV (64 aa)) enclose the S5 DRBM domain.

This sequence belongs to the universal ribosomal protein uS5 family. Part of the 30S ribosomal subunit. Contacts proteins S4 and S8.

Its function is as follows. With S4 and S12 plays an important role in translational accuracy. Located at the back of the 30S subunit body where it stabilizes the conformation of the head with respect to the body. The polypeptide is Small ribosomal subunit protein uS5 (Rhizobium etli (strain CIAT 652)).